The following is a 431-amino-acid chain: MKLLALFPFLAIVIQLSCWELGTDALPSGGFVRTKGVQFSLNGYPYYANGFNAYWLMYVASDPSQRSKISTAFQDASRHGLTVARTWAFSDGGYRALQYSPGSYNEDMFQGLDFALAEARRHGIKIILSFANNYESFGGRKQYVDWARSRGRPVSSEDDFFTDSLVKDFYKNHIKAVLNRFNTFTKVHYKDDPTIMAWELMNEPRCPSDPSGRAIQAWITEMAAHVKSLDRNHLLEAGLEGFYGQSSPQSKTLNPPGQFGTDFIANNRIPGIDFVTVHSYPDEWFPDSSEQSQMDFLNKWLDAHIQDAQNVLHKPIILAEFGKSMKKPGYTPAQRDIVFNTVYSKIYGSAKRGGAAAGGLFWQLLVNGIDNFQDGYGIILSQSSSTVNVISQQSRKLTLIRKIFARMINVEKWKRARGQGQVGKRGHKINN.

The N-terminal stretch at 1 to 25 (MKLLALFPFLAIVIQLSCWELGTDA) is a signal peptide. 2 residues coordinate substrate: tryptophan 87 and asparagine 202. Catalysis depends on glutamate 203, which acts as the Proton donor. Tyrosine 280 serves as a coordination point for substrate. Glutamate 320 acts as the Nucleophile in catalysis. Tryptophan 362 is a binding site for substrate.

It belongs to the glycosyl hydrolase 5 (cellulase A) family. Expressed in stems, flowers, siliques and seeds. Expressed in root vasculature, leaf hydathodes, anther filaments, stigma, sepal vasculature, at the base and apical parts of siliques, and replum. Expressed in the micropylar endosperm and radicle tip in early germinating seeds.

The protein localises to the secreted. The enzyme catalyses Random hydrolysis of (1-&gt;4)-beta-D-mannosidic linkages in mannans, galactomannans and glucomannans.. Functionally, required for both, loosening of the micropylar endosperm, and rupture of the seed coat in germinating seeds. May participate in the hydrolysis of the mannans in the cell wall of germinating seeds. This chain is Mannan endo-1,4-beta-mannosidase 7 (MAN7), found in Arabidopsis thaliana (Mouse-ear cress).